The primary structure comprises 299 residues: ATP phosphoribosyltransferase (299 aa).

Belongs to the ATP phosphoribosyltransferase family. Long subfamily. Equilibrium between an active dimeric form, an inactive hexameric form and higher aggregates. Interconversion between the various forms is largely reversible and is influenced by the natural substrates and inhibitors of the enzyme. Mg(2+) serves as cofactor.

It is found in the cytoplasm. It carries out the reaction 1-(5-phospho-beta-D-ribosyl)-ATP + diphosphate = 5-phospho-alpha-D-ribose 1-diphosphate + ATP. The protein operates within amino-acid biosynthesis; L-histidine biosynthesis; L-histidine from 5-phospho-alpha-D-ribose 1-diphosphate: step 1/9. Feedback inhibited by histidine. Functionally, catalyzes the condensation of ATP and 5-phosphoribose 1-diphosphate to form N'-(5'-phosphoribosyl)-ATP (PR-ATP). Has a crucial role in the pathway because the rate of histidine biosynthesis seems to be controlled primarily by regulation of HisG enzymatic activity. This Klebsiella pneumoniae (strain 342) protein is ATP phosphoribosyltransferase.